Consider the following 247-residue polypeptide: MQHPLELGAAHYFPAEAFPDHRSHRYRSFMIEEILTDPPDAKGTAPPGELLKFGVQALLSARPYHSHLAVLKAEPAAVFKFPLAPLGCSGLGSALLAAGSGLQGGSASPHLPLELHLRGKLEPGGPETGSKAKKGRRSRTVFTELQLMGLEKRFEKQKYLSTPDRIDLAESLGLSQLQVKTWYQNRRMKWKKIVLQGGGLESPTKPKGRPKKNSIPSSEQLSEQERARDAEKPPESLGSPAEVSQEE.

2 disordered regions span residues 118-138 (RGKL…GRRS) and 197-247 (GGGL…SQEE). The homeobox DNA-binding region spans 135–194 (GRRSRTVFTELQLMGLEKRFEKQKYLSTPDRIDLAESLGLSQLQVKTWYQNRRMKWKKIV). Residues 223 to 234 (EQERARDAEKPP) are compositionally biased toward basic and acidic residues.

Belongs to the BAR homeobox family. In terms of assembly, interacts with serum response factor (SRF). In terms of tissue distribution, expressed in smooth muscle cells of the upper digestive organs and their attached arteries and to craniofacial structures.

It is found in the nucleus. Its function is as follows. Transcription factor which is involved with the serum response factor (SRF) in the smooth muscle cell-specific transcription of the beta-tropomyosin gene in the upper digestive organs and their attached arteries. This chain is Homeobox protein BarH-like 1b (BARX1B), found in Gallus gallus (Chicken).